The sequence spans 349 residues: Anthranilate phosphoribosyltransferase (349 aa).

5-phospho-alpha-D-ribose 1-diphosphate contacts are provided by residues G82, 85–86, 92–95, 110–118, and S122; these read GD, NVST, and KHGNRAVSG. G82 serves as a coordination point for anthranilate. Position 94 (S94) interacts with Mg(2+). N113 provides a ligand contact to anthranilate. Anthranilate is bound at residue R168. Residues D227 and E228 each contribute to the Mg(2+) site.

Belongs to the anthranilate phosphoribosyltransferase family. Homodimer. Mg(2+) serves as cofactor.

The catalysed reaction is N-(5-phospho-beta-D-ribosyl)anthranilate + diphosphate = 5-phospho-alpha-D-ribose 1-diphosphate + anthranilate. It participates in amino-acid biosynthesis; L-tryptophan biosynthesis; L-tryptophan from chorismate: step 2/5. Its function is as follows. Catalyzes the transfer of the phosphoribosyl group of 5-phosphorylribose-1-pyrophosphate (PRPP) to anthranilate to yield N-(5'-phosphoribosyl)-anthranilate (PRA). The protein is Anthranilate phosphoribosyltransferase of Pseudomonas fluorescens (strain Pf0-1).